A 213-amino-acid polypeptide reads, in one-letter code: Macrodontain-1 (213 aa).

3 disulfides stabilise this stretch: C23–C63, C57–C96, and C153–C201. C26 is a catalytic residue. Residues H159 and N176 contribute to the active site.

As to quaternary structure, monomer. As to expression, fruits.

Inhibited by the general cysteine protease inhibitor E64 (L-trans-epoxysuccinyl-leucylamide-(4-guanido)-butane). Cysteine protease that catalyzes the preferential cleavage: Ala-|-Xaa &gt; Gln-|-Xaa &gt; Tyr-Xaa &gt;&gt; Leu-|-Xaa &gt; Gly-|-Xaa. Hydrolyzes the synthetic peptide substrate Bz-Phe-Val-Arg-pNA. In Ananas macrodontes (False pineapple), this protein is Macrodontain-1.